The sequence spans 473 residues: Vasculin (473 aa).

3 disordered regions span residues 1 to 25, 46 to 149, and 191 to 342; these read MAQHDFAPAWLNFPTPPSSTKSSLN, RHNS…REPN, and VGNL…QERD. Residue Ser-49 is modified to Phosphoserine. At Arg-87 the chain carries Omega-N-methylarginine. Residues 119–133 show a composition bias toward basic and acidic residues; that stretch reads ETGRKEDKRERKQFE. Polar residues-rich tracts occupy residues 194–204 and 251–286; these read LPSQPVKNGTG and AFKSTAKNFSPSTNSVKECNRSNSSSPVDKLNQQPR. A phosphoserine mark is found at Ser-274, Ser-276, Ser-322, and Ser-381. Positions 293-329 are enriched in basic and acidic residues; the sequence is MRTDKKSEFLKALKRDRVEEEHEDESRAGSEKDDDSF. The interval 444 to 473 is disordered; sequence GPWKNSTFKPTTENDDTETSSSDTSDDDDV. A compositionally biased stretch (acidic residues) spans 456 to 473; it reads ENDDTETSSSDTSDDDDV.

Belongs to the vasculin family. In terms of assembly, interacts with GTF2B, GTF2F2, RNA polymerase II and TBP. Widely expressed. Some isoforms may be specifically expressed in veins and arteries (at protein level). Isoform 4 is widely expressed. Isoform 1, isoform 2 and isoform 3 may be specifically expressed in vascular smooth muscle cells.

Its subcellular location is the nucleus. The protein resides in the cytoplasm. Functionally, functions as a GC-rich promoter-specific transactivating transcription factor. This Homo sapiens (Human) protein is Vasculin (GPBP1).